A 134-amino-acid polypeptide reads, in one-letter code: Phosphoribosyl-AMP cyclohydrolase (134 aa).

Residue D80 participates in Mg(2+) binding. Position 81 (C81) interacts with Zn(2+). Positions 82 and 84 each coordinate Mg(2+). Residues C98 and C105 each coordinate Zn(2+).

The protein belongs to the PRA-CH family. As to quaternary structure, homodimer. It depends on Mg(2+) as a cofactor. The cofactor is Zn(2+).

The protein resides in the cytoplasm. It carries out the reaction 1-(5-phospho-beta-D-ribosyl)-5'-AMP + H2O = 1-(5-phospho-beta-D-ribosyl)-5-[(5-phospho-beta-D-ribosylamino)methylideneamino]imidazole-4-carboxamide. Its pathway is amino-acid biosynthesis; L-histidine biosynthesis; L-histidine from 5-phospho-alpha-D-ribose 1-diphosphate: step 3/9. Functionally, catalyzes the hydrolysis of the adenine ring of phosphoribosyl-AMP. This Bordetella avium (strain 197N) protein is Phosphoribosyl-AMP cyclohydrolase.